The primary structure comprises 496 residues: RNA-binding motif protein, Y chromosome, family 1 member F/J (496 aa).

Residues 8-85 enclose the RRM domain; sequence GKLFIGGLNR…KAIKVEQAKK (78 aa). 2 disordered regions span residues 81-345 and 452-496; these read EQAK…YAPP and KDQR…SSRY. Low complexity-rich tracts occupy residues 97 to 114 and 149 to 159; these read PASSRNRSPSGSLRSARG and PVKRGPSSRSG. Polar residues predominate over residues 175-184; that stretch reads NSWMGSQGPM. 6 stretches are compositionally biased toward basic and acidic residues: residues 204-214, 242-253, 276-289, 313-326, 335-345, and 484-496; these read RNDRMSTRHDG, DNGHSNRDEHSS, AYRDYGHSRRDESY, GYRDYGHSRRHESY, SSRETRDYAPP, and GESRSEKGDSSRY.

In terms of assembly, interacts with splicing factor proteins SFRS3/SRP20, TRA2B/SFRS10, KHDRBS1/SAM68 and KHDRBS3. In terms of tissue distribution, testis-specific.

The protein localises to the nucleus. In terms of biological role, RNA-binding protein which may be involved in spermatogenesis. Required for sperm development, possibly by participating in pre-mRNA splicing in the testis. The sequence is that of RNA-binding motif protein, Y chromosome, family 1 member F/J (RBMY1F) from Homo sapiens (Human).